Here is a 543-residue protein sequence, read N- to C-terminus: CTP synthase (543 aa).

The amidoligase domain stretch occupies residues 1–270 (MNNLTSTKFI…DTQILKHFNI (270 aa)). Residue Ser18 coordinates CTP. Ser18 lines the UTP pocket. ATP contacts are provided by residues 19 to 24 (SLGKGL) and Asp76. Mg(2+) is bound by residues Asp76 and Glu144. Residues 151 to 153 (DIE), 191 to 196 (KTKPTQ), and Lys227 each bind CTP. UTP contacts are provided by residues 191–196 (KTKPTQ) and Lys227. In terms of domain architecture, Glutamine amidotransferase type-1 spans 295–537 (TIAIIGKYIK…IQASLNYQET (243 aa)). L-glutamine is bound at residue Gly356. Cys383 (nucleophile; for glutamine hydrolysis) is an active-site residue. L-glutamine is bound by residues 384-387 (MGMQ), Glu407, and Arg462. Catalysis depends on residues His510 and Glu512.

It belongs to the CTP synthase family. In terms of assembly, homotetramer.

It catalyses the reaction UTP + L-glutamine + ATP + H2O = CTP + L-glutamate + ADP + phosphate + 2 H(+). The catalysed reaction is L-glutamine + H2O = L-glutamate + NH4(+). It carries out the reaction UTP + NH4(+) + ATP = CTP + ADP + phosphate + 2 H(+). Its pathway is pyrimidine metabolism; CTP biosynthesis via de novo pathway; CTP from UDP: step 2/2. With respect to regulation, allosterically activated by GTP, when glutamine is the substrate; GTP has no effect on the reaction when ammonia is the substrate. The allosteric effector GTP functions by stabilizing the protein conformation that binds the tetrahedral intermediate(s) formed during glutamine hydrolysis. Inhibited by the product CTP, via allosteric rather than competitive inhibition. Functionally, catalyzes the ATP-dependent amination of UTP to CTP with either L-glutamine or ammonia as the source of nitrogen. Regulates intracellular CTP levels through interactions with the four ribonucleotide triphosphates. In Ehrlichia ruminantium (strain Gardel), this protein is CTP synthase.